The following is a 721-amino-acid chain: Procollagen-lysine,2-oxoglutarate 5-dioxygenase (721 aa).

Positions 1–21 are cleaved as a signal peptide; sequence MRIQQSALLLLLLAVTSQGDA. Residues Asn504, Asn530, and Asn536 are each glycosylated (N-linked (GlcNAc...) asparagine). Residues 627-721 form the Fe2OG dioxygenase domain; sequence NPPRALMNFM…RYIMISFIDP (95 aa). Fe cation is bound by residues His650 and Asp652. The N-linked (GlcNAc...) asparagine glycan is linked to Asn680. A Fe cation-binding site is contributed by His702. N-linked (GlcNAc...) asparagine glycosylation is present at Asn709. Arg712 is a binding site for 2-oxoglutarate.

Requires L-ascorbate as cofactor. It depends on Fe(2+) as a cofactor.

The protein resides in the endoplasmic reticulum. It localises to the secreted. Its subcellular location is the extracellular space. The catalysed reaction is L-lysyl-[collagen] + 2-oxoglutarate + O2 = (5R)-5-hydroxy-L-lysyl-[collagen] + succinate + CO2. Functionally, forms hydroxylysine residues in collagen type IV. Required for the secretion of collagen type IV (vkg) from haemocytes, fat body and follicle cells. The sequence is that of Procollagen-lysine,2-oxoglutarate 5-dioxygenase from Drosophila melanogaster (Fruit fly).